Reading from the N-terminus, the 698-residue chain is Elongation factor G (698 aa).

In terms of domain architecture, tr-type G spans 10–285; the sequence is DKTRNIGIMA…GVVDYLPSPL (276 aa). Residues 19–26, 83–87, and 137–140 each bind GTP; these read AHIDAGKT, DTPGH, and NKMD.

Belongs to the TRAFAC class translation factor GTPase superfamily. Classic translation factor GTPase family. EF-G/EF-2 subfamily.

It localises to the cytoplasm. In terms of biological role, catalyzes the GTP-dependent ribosomal translocation step during translation elongation. During this step, the ribosome changes from the pre-translocational (PRE) to the post-translocational (POST) state as the newly formed A-site-bound peptidyl-tRNA and P-site-bound deacylated tRNA move to the P and E sites, respectively. Catalyzes the coordinated movement of the two tRNA molecules, the mRNA and conformational changes in the ribosome. This chain is Elongation factor G, found in Lactobacillus johnsonii (strain CNCM I-12250 / La1 / NCC 533).